A 433-amino-acid polypeptide reads, in one-letter code: Histidine--tRNA ligase (433 aa).

It belongs to the class-II aminoacyl-tRNA synthetase family. In terms of assembly, homodimer.

Its subcellular location is the cytoplasm. It carries out the reaction tRNA(His) + L-histidine + ATP = L-histidyl-tRNA(His) + AMP + diphosphate + H(+). The chain is Histidine--tRNA ligase from Crocosphaera subtropica (strain ATCC 51142 / BH68) (Cyanothece sp. (strain ATCC 51142)).